Reading from the N-terminus, the 288-residue chain is Elongation factor Ts (288 aa).

The involved in Mg(2+) ion dislocation from EF-Tu stretch occupies residues 79–82 (TDFV).

This sequence belongs to the EF-Ts family.

It is found in the cytoplasm. Associates with the EF-Tu.GDP complex and induces the exchange of GDP to GTP. It remains bound to the aminoacyl-tRNA.EF-Tu.GTP complex up to the GTP hydrolysis stage on the ribosome. The protein is Elongation factor Ts of Ehrlichia ruminantium (strain Gardel).